Reading from the N-terminus, the 241-residue chain is Large ribosomal subunit protein uL3 (241 aa).

Disordered stretches follow at residues 139-166 (VSHRSIGSTGGRQDPGKTFKNKKMPGHM) and 209-241 (KKPLPKDAPKPGKFKVAGDDKVTADAPTEKEGA). Gln151 is modified (N5-methylglutamine).

The protein belongs to the universal ribosomal protein uL3 family. Part of the 50S ribosomal subunit. Forms a cluster with proteins L14 and L19. Methylated by PrmB.

In terms of biological role, one of the primary rRNA binding proteins, it binds directly near the 3'-end of the 23S rRNA, where it nucleates assembly of the 50S subunit. This Nitrobacter hamburgensis (strain DSM 10229 / NCIMB 13809 / X14) protein is Large ribosomal subunit protein uL3.